The primary structure comprises 395 residues: S-adenosylmethionine synthase (395 aa).

Position 16 (H16) interacts with ATP. Residue D18 participates in Mg(2+) binding. E44 lines the K(+) pocket. Positions 57 and 100 each coordinate L-methionine. The tract at residues 100–110 (QSPDIAQGVDD) is flexible loop. ATP is bound by residues 174 to 176 (DAK), 241 to 242 (RF), D250, 256 to 257 (RK), A273, and K277. D250 contributes to the L-methionine binding site. K281 serves as a coordination point for L-methionine.

This sequence belongs to the AdoMet synthase family. In terms of assembly, homotetramer; dimer of dimers. Requires Mg(2+) as cofactor. The cofactor is K(+).

It is found in the cytoplasm. It carries out the reaction L-methionine + ATP + H2O = S-adenosyl-L-methionine + phosphate + diphosphate. Its pathway is amino-acid biosynthesis; S-adenosyl-L-methionine biosynthesis; S-adenosyl-L-methionine from L-methionine: step 1/1. In terms of biological role, catalyzes the formation of S-adenosylmethionine (AdoMet) from methionine and ATP. The overall synthetic reaction is composed of two sequential steps, AdoMet formation and the subsequent tripolyphosphate hydrolysis which occurs prior to release of AdoMet from the enzyme. The chain is S-adenosylmethionine synthase from Limosilactobacillus reuteri (strain DSM 20016) (Lactobacillus reuteri).